The primary structure comprises 142 residues: Transcriptional regulator MraZ (142 aa).

SpoVT-AbrB domains are found at residues 5–51 (ASAL…PRPE) and 77–120 (AMDV…DSQT).

It belongs to the MraZ family. Forms oligomers.

The protein resides in the cytoplasm. Its subcellular location is the nucleoid. The chain is Transcriptional regulator MraZ from Burkholderia cenocepacia (strain ATCC BAA-245 / DSM 16553 / LMG 16656 / NCTC 13227 / J2315 / CF5610) (Burkholderia cepacia (strain J2315)).